The primary structure comprises 2415 residues: Bradyzoite-formation deficient protein 1 (2415 aa).

3 disordered regions span residues 369 to 392 (WNKP…PEET), 418 to 481 (HLTS…PYTR), and 761 to 845 (DGCG…QDTQ). Residues 419–429 (LTSRQHPNPRP) show a composition bias toward basic residues. Over residues 430-443 (RMKEEHCGREREVL) the composition is skewed to basic and acidic residues. Polar residues-rich tracts occupy residues 444-460 (SSEQ…TPAS) and 832-843 (PRTTSSSSYGQD). Residues 921–968 (WSAEEDASLAELVSRKGFKWALISSQLTGAFGIPRTGKQCRERWFNHV) enclose the Myb-like domain. Residues 969-1023 (NPEVKKGDWSAEEDAMILMLQNELGNRWATIAKKLRGRTENAVKNRFISLSNARL) enclose the HTH myb-type domain. Positions 996 to 1019 (WATIAKKLRGRTENAVKNRFISLS) form a DNA-binding region, H-T-H motif. Disordered regions lie at residues 1027–1050 (RPKR…KSSG), 1098–1127 (VSRP…LKNT), 1206–1270 (NDER…NGLD), 1319–1343 (PACD…AQRQ), 1501–1521 (QLWT…QQHE), 1905–1932 (VSRD…TSQS), 1959–2013 (RVRW…GSTA), and 2161–2222 (GTDA…EMQD). Residues 1036–1050 (DCFSNRRTGSGKSSG) are compositionally biased toward polar residues. The segment covering 1227–1237 (AHEHADIARSD) has biased composition (basic and acidic residues). Polar residues-rich tracts occupy residues 1327-1343 (PQNS…AQRQ) and 1501-1520 (QLWT…NQQH). Residues 1974–1985 (SVSSGASNSATT) show a composition bias toward polar residues. Positions 2181–2197 (QAHRRDGHDMQRVQRCD) are enriched in basic and acidic residues.

The protein resides in the nucleus. Master transcription factor that controls the differentiation of acute-stage tachyzoite parasites into chronic-stage bradyzoites, which form intracellular cysts resistant to immune clearance and existing therapies. Sufficient to drive differentiation into bradyzoite stage. Following translation in response to stress conditions, binds to the promoter of many chronic stage-specific genes and promotes their expression, thereby driving differentiation into bradyzoites. This chain is Bradyzoite-formation deficient protein 1, found in Toxoplasma gondii (strain ATCC 50611 / Me49).